The chain runs to 191 residues: Thymidylate kinase (191 aa).

An ATP-binding site is contributed by 7 to 14; that stretch reads GIDTAGKS.

The protein belongs to the thymidylate kinase family.

It carries out the reaction dTMP + ATP = dTDP + ADP. Functionally, phosphorylation of dTMP to form dTDP in both de novo and salvage pathways of dTTP synthesis. This Sulfurimonas denitrificans (strain ATCC 33889 / DSM 1251) (Thiomicrospira denitrificans (strain ATCC 33889 / DSM 1251)) protein is Thymidylate kinase.